The primary structure comprises 152 residues: Gene 35 protein (152 aa).

Residues P86 to Y120 are a coiled coil.

Belongs to the herpesviridae UL96 family.

The sequence is that of Gene 35 protein (35) from Connochaetes taurinus (Blue wildebeest).